The chain runs to 431 residues: Keratin, type I cytoskeletal 18 (431 aa).

A head region spans residues 2–83; the sequence is SLRTSYSVRS…SGSTGEIMGN (82 aa). Serine 12 is subject to Phosphoserine. Phosphothreonine is present on threonine 13. 2 positions are modified to phosphoserine: serine 22 and serine 36. The segment at 84–119 is coil 1A; the sequence is EKMAMQNLNDRLASYLEKVRILEQANSKLELKIREA. The region spanning 84–395 is the IF rod domain; sequence EKMAMQNLND…RLLDGGDFKL (312 aa). Residues 120-136 are linker 1; that stretch reads LEKRGPDVHDYSRFQPI. A coil 1B region spans residues 137 to 228; sequence VDELRKKIFD…KNHDNEVMEL (92 aa). The linker 12 stretch occupies residues 229–252; it reads RNQISQSGVQVDVDAPKGQDLSQI. The coil 2 stretch occupies residues 253–390; that stretch reads MEEIRAKYEK…IATYRRLLDG (138 aa). Residues 391-431 are tail; the sequence is GDFKLQDALEEQKKVKVMTVTQTLVDGKVVSSSTETKERKL.

This sequence belongs to the intermediate filament family. In terms of assembly, heterotetramer of two type I and two type II keratins. Keratin-18 associates with keratin-8. Post-translationally, proteolytically cleaved by caspases during epithelial cell apoptosis. Expressed in simple epithelia such as intestinal mucosa, bile duct, hepatocytes, renal tubules, endothelia, ocular lens epithelium, and in a variety of mesenchymally-derived cells such as blood vessel endothelia, pillar gill cells, optic nerve glial cells, fibroblasts, interstitial cells, chondrocytes and ovarian theca cells. Also expressed in epidermis, pharyngeal mucosa, mucosa of anterior esophagus, gill mucosa and cornea.

When phosphorylated, plays a role in filament reorganization. This Danio rerio (Zebrafish) protein is Keratin, type I cytoskeletal 18.